The following is a 210-amino-acid chain: Chaperone protein TorD (210 aa).

It belongs to the TorD/DmsD family. TorD subfamily.

The protein resides in the cytoplasm. Its function is as follows. Involved in the biogenesis of TorA. Acts on TorA before the insertion of the molybdenum cofactor and, as a result, probably favors a conformation of the apoenzyme that is competent for acquiring the cofactor. In Salmonella paratyphi B (strain ATCC BAA-1250 / SPB7), this protein is Chaperone protein TorD.